Consider the following 382-residue polypeptide: Queuine tRNA-ribosyltransferase (382 aa).

Asp-96 (proton acceptor) is an active-site residue. Substrate-binding positions include 96-100, Asp-151, Gln-194, and Gly-221; that span reads DSGGF. Positions 252–258 are RNA binding; sequence GVGAPDS. The active-site Nucleophile is Asp-271. The interval 276 to 280 is RNA binding; important for wobble base 34 recognition; it reads TRIAR. Zn(2+) is bound by residues Cys-309, Cys-311, Cys-314, and His-340.

The protein belongs to the queuine tRNA-ribosyltransferase family. Homodimer. Within each dimer, one monomer is responsible for RNA recognition and catalysis, while the other monomer binds to the replacement base PreQ1. The cofactor is Zn(2+).

The catalysed reaction is 7-aminomethyl-7-carbaguanine + guanosine(34) in tRNA = 7-aminomethyl-7-carbaguanosine(34) in tRNA + guanine. Its pathway is tRNA modification; tRNA-queuosine biosynthesis. Catalyzes the base-exchange of a guanine (G) residue with the queuine precursor 7-aminomethyl-7-deazaguanine (PreQ1) at position 34 (anticodon wobble position) in tRNAs with GU(N) anticodons (tRNA-Asp, -Asn, -His and -Tyr). Catalysis occurs through a double-displacement mechanism. The nucleophile active site attacks the C1' of nucleotide 34 to detach the guanine base from the RNA, forming a covalent enzyme-RNA intermediate. The proton acceptor active site deprotonates the incoming PreQ1, allowing a nucleophilic attack on the C1' of the ribose to form the product. After dissociation, two additional enzymatic reactions on the tRNA convert PreQ1 to queuine (Q), resulting in the hypermodified nucleoside queuosine (7-(((4,5-cis-dihydroxy-2-cyclopenten-1-yl)amino)methyl)-7-deazaguanosine). This is Queuine tRNA-ribosyltransferase from Lactococcus lactis subsp. cremoris (strain MG1363).